A 567-amino-acid polypeptide reads, in one-letter code: Thiol:disulfide interchange protein DsbD (567 aa).

The first 19 residues, 1–19 (MAQRIFTLILLLCSTSAFA), serve as a signal peptide directing secretion. 2 cysteine pairs are disulfide-bonded: C122-C128 and C185-C307. 7 consecutive transmembrane segments (helical) span residues 170–192 (ALWA…MYPL), 212–234 (LAFI…VAAA), 246–268 (YVLI…LFTL), 297–319 (GAIA…LLYI), 326–348 (WLGG…LVTV), 358–380 (GPWM…VFLL), and 387–409 (AWGL…ITSL). Residues 435-567 (QDWAFGSPSA…FSAHLHDRQP (133 aa)) form the Thioredoxin domain. Residues C482 and C485 are joined by a disulfide bond.

It belongs to the thioredoxin family. DsbD subfamily.

It is found in the cell inner membrane. It catalyses the reaction [protein]-dithiol + NAD(+) = [protein]-disulfide + NADH + H(+). The catalysed reaction is [protein]-dithiol + NADP(+) = [protein]-disulfide + NADPH + H(+). Required to facilitate the formation of correct disulfide bonds in some periplasmic proteins and for the assembly of the periplasmic c-type cytochromes. Acts by transferring electrons from cytoplasmic thioredoxin to the periplasm. This transfer involves a cascade of disulfide bond formation and reduction steps. The polypeptide is Thiol:disulfide interchange protein DsbD (Salmonella typhi).